The primary structure comprises 96 residues: UPF0235 protein Sputcn32_2690 (96 aa).

Belongs to the UPF0235 family.

This is UPF0235 protein Sputcn32_2690 from Shewanella putrefaciens (strain CN-32 / ATCC BAA-453).